Consider the following 679-residue polypeptide: Transketolase 10 (679 aa).

Substrate is bound at residue H40. Thiamine diphosphate contacts are provided by residues H80 and 129–131 (GPL). D170 serves as a coordination point for Mg(2+). Thiamine diphosphate-binding residues include G171 and N200. Mg(2+) is bound by residues N200 and I202. Residues H277, R371, and S398 each contribute to the substrate site. H277 serves as a coordination point for thiamine diphosphate. E425 and F452 together coordinate thiamine diphosphate. The Proton donor role is filled by E425. Substrate-binding residues include H476, D484, and R535.

The protein belongs to the transketolase family. Homodimer. Mg(2+) serves as cofactor. Requires Ca(2+) as cofactor. It depends on Mn(2+) as a cofactor. Co(2+) is required as a cofactor. The cofactor is thiamine diphosphate. Leaves.

It catalyses the reaction D-sedoheptulose 7-phosphate + D-glyceraldehyde 3-phosphate = aldehydo-D-ribose 5-phosphate + D-xylulose 5-phosphate. Its function is as follows. Could be involved in the conversion of sugars, which are a major phenomenon in the rehydration process. In terms of biological role, catalyzes the transfer of a two-carbon ketol group from a ketose donor to an aldose acceptor, via a covalent intermediate with the cofactor thiamine pyrophosphate. The protein is Transketolase 10 (TKT10) of Craterostigma plantagineum (Blue gem).